We begin with the raw amino-acid sequence, 137 residues long: Basic phospholipase A2 homolog Cax-K49 (137 aa).

Residues 1-16 (MRTFWIVAMLLVGVEG) form the signal peptide. Disulfide bonds link cysteine 42–cysteine 131, cysteine 44–cysteine 60, cysteine 59–cysteine 111, cysteine 65–cysteine 137, cysteine 66–cysteine 104, cysteine 73–cysteine 97, and cysteine 91–cysteine 102. The important for membrane-damaging activities in eukaryotes and bacteria; heparin-binding stretch occupies residues 121 to 133 (KKYKIYPKFLCKK).

In terms of assembly, homodimer; non-covalently linked. In terms of tissue distribution, expressed by the venom gland.

The protein localises to the secreted. Its function is as follows. Snake venom phospholipase A2 homolog that lacks enzymatic activity. Displays edema-inducing activities and may be myotoxic. A model of myotoxic mechanism has been proposed: an apo Lys49-PLA2 is activated by the entrance of a hydrophobic molecule (e.g. fatty acid) at the hydrophobic channel of the protein leading to a reorientation of a monomer. This reorientation causes a transition between 'inactive' to 'active' states, causing alignment of C-terminal and membrane-docking sites (MDoS) side-by-side and putting the membrane-disruption sites (MDiS) in the same plane, exposed to solvent and in a symmetric position for both monomers. The MDoS region stabilizes the toxin on membrane by the interaction of charged residues with phospholipid head groups. Subsequently, the MDiS region destabilizes the membrane with penetration of hydrophobic residues. This insertion causes a disorganization of the membrane, allowing an uncontrolled influx of ions (i.e. calcium and sodium), and eventually triggering irreversible intracellular alterations and cell death. In Crotalus atrox (Western diamondback rattlesnake), this protein is Basic phospholipase A2 homolog Cax-K49.